The primary structure comprises 142 residues: NADH-quinone oxidoreductase subunit A 2 (142 aa).

3 helical membrane-spanning segments follow: residues 18–38 (FLPL…LLLA), 73–93 (FYLI…IFAW), and 104–124 (GLVH…WLWL).

Belongs to the complex I subunit 3 family. As to quaternary structure, NDH-1 is composed of 14 different subunits. Subunits NuoA, H, J, K, L, M, N constitute the membrane sector of the complex.

The protein resides in the cell inner membrane. The catalysed reaction is a quinone + NADH + 5 H(+)(in) = a quinol + NAD(+) + 4 H(+)(out). NDH-1 shuttles electrons from NADH, via FMN and iron-sulfur (Fe-S) centers, to quinones in the respiratory chain. The immediate electron acceptor for the enzyme in this species is believed to be ubiquinone. Couples the redox reaction to proton translocation (for every two electrons transferred, four hydrogen ions are translocated across the cytoplasmic membrane), and thus conserves the redox energy in a proton gradient. The polypeptide is NADH-quinone oxidoreductase subunit A 2 (Geobacter sulfurreducens (strain ATCC 51573 / DSM 12127 / PCA)).